We begin with the raw amino-acid sequence, 394 residues long: Purine ribonucleoside efflux pump NepI (394 aa).

Over 1 to 21 (MSEFIAENRGADAITRPNWSA) the chain is Cytoplasmic. Residues 22–42 (VFSVAFCVACLIIVEFLPVSL) form a helical membrane-spanning segment. Topologically, residues 43–54 (LTPMAQDLGISE) are periplasmic. The chain crosses the membrane as a helical span at residues 55-75 (GVAGQSVTVTAFVAMFASLFI). Residues 76–85 (TQTIQATDRR) are Cytoplasmic-facing. A helical transmembrane segment spans residues 86–106 (YVVILFAVLLTISCLLVSFAN). Position 107 (Ser-107) is a topological domain, periplasmic. A helical transmembrane segment spans residues 108–128 (FSLLLIGRACLGLALGGFWAM). At 129–147 (SASLTMRLVPPRTVPKALS) the chain is on the cytoplasmic side. A helical membrane pass occupies residues 148-168 (VIFGAVSIALVIAAPLGSFLG). The Periplasmic segment spans residues 169–175 (ELIGWRN). The chain crosses the membrane as a helical span at residues 176–196 (VFNAAAVMGVLCIFWIIKSLP). The Cytoplasmic portion of the chain corresponds to 197–215 (SLPGKPSHQKQNTFRLLQR). Residues 216–236 (PGVMAGMIAIFMSFAGQFAFF) form a helical membrane-spanning segment. At 237-255 (TYIRPVYMNLAGFGVDGLT) the chain is on the periplasmic side. A helical transmembrane segment spans residues 256–276 (LVLLSFGIASFIGTSLSSFIL). The Cytoplasmic segment spans residues 277–281 (KRSVK). A helical membrane pass occupies residues 282–302 (LALAGAPLILAVSALVLTLCG). Residues 303 to 305 (SDK) lie on the Periplasmic side of the membrane. Residues 306-326 (IVATGVAIIWGLTFALVPVGW) form a helical membrane-spanning segment. Over 327-343 (STWSTRSLADQAEKAGS) the chain is Cytoplasmic. The chain crosses the membrane as a helical span at residues 344–364 (IQVAVIQLANTCGAAIGGYAL). At 365-366 (DN) the chain is on the periplasmic side. Residues 367–387 (IGLTSPLMLSGTLMLLTALLV) form a helical membrane-spanning segment. Topologically, residues 388–394 (TAKVKMK) are cytoplasmic.

The protein belongs to the major facilitator superfamily. DHA1 family. NepI (TC 2.A.1.2.26) subfamily.

It localises to the cell inner membrane. It carries out the reaction inosine(in) + H(+)(out) = inosine(out) + H(+)(in). The enzyme catalyses guanosine(in) + H(+)(out) = guanosine(out) + H(+)(in). Involved in the efflux of purine ribonucleosides, such as inosine and guanosine. The chain is Purine ribonucleoside efflux pump NepI from Shigella dysenteriae serotype 1 (strain Sd197).